A 453-amino-acid polypeptide reads, in one-letter code: O-glucose prenyltransferase PaPT (453 aa).

An L-tryptophan-binding site is contributed by 95–96 (AP). 7 residues coordinate substrate: Lys210, Tyr212, Arg279, Lys281, Tyr283, Tyr368, and Tyr435.

Belongs to the tryptophan dimethylallyltransferase family.

It participates in mycotoxin biosynthesis. O-glucose prenyltransferase; part of the 2 gene clusters that mediate the biosynthesis of fusicoccins, diterpene glucosides that display phytohormone-like activity and function as potent activators of plasma membrane H(+)-ATPases in plants by modifying 14-3-3 proteins and cause the plant disease constriction canker. The first step in the pathway is performed by the fusicoccadiene synthase PaFS that possesses both prenyl transferase and terpene cyclase activity, converting isopentenyl diphosphate and dimethylallyl diphosphate into geranylgeranyl diphosphate (GGDP) and successively converting GGDP into fusicocca-2,10(14)-diene, a precursor for fusicoccin H. The second step is the oxidation at the C-8 position by the cytochrome P450 monooxygenase PaP450-2 to yield fusicocca-2,10(14)-diene-8-beta-ol. The cytochrome P450 monooxygenase PaP450-1 then catalyzes the hydroxylation at the C-16 position to produce fusicocca-2,10(14)-diene-8-beta,16-diol. The dioxygenase fc-dox then catalyzes the 16-oxydation of fusicocca-2,10(14)-diene-8-beta,16-diol to yield an aldehyde (8-beta-hydroxyfusicocca-1,10(14)-dien-16-al). The short-chain dehydrogenase/reductase fc-sdr catalyzes the reduction of the aldehyde to yield fusicocca-1,10(14)-diene-8-beta,16-diol. The next step is the hydroxylation at C-9 performed by the cytochrome P450 monooxygenase PaP450-3 that leads to fusicoccin H aglycon which is glycosylated to fusicoccin H by the O-glycosyltransferase PaGT. Hydroxylation at C-12 by the cytochrome P450 monooxygenase PaP450-4 leads then to the production of fusicoccin Q and is followed by methylation by the O-methyltransferase PaMT to yield fusicoccin P. Fusicoccin P is further converted to fusicoccin J via prenylation by the O-glucose prenyltransferase PaPT. Cytochrome P450 monooxygenase PaP450-5 then performs hydroxylation at C-19 to yield dideacetyl-fusicoccin A which is acetylated to 3'-O-deacetyl-fusicoccin A by the O-acetyltransferase PaAT-2. Finally, a another acetylation by the O-acetyltransferase PaAT-1 yields fusicoccin A. This is O-glucose prenyltransferase PaPT from Phomopsis amygdali (Fusicoccum amygdali).